Here is a 183-residue protein sequence, read N- to C-terminus: ATP synthase subunit delta (183 aa).

This sequence belongs to the ATPase delta chain family. F-type ATPases have 2 components, F(1) - the catalytic core - and F(0) - the membrane proton channel. F(1) has five subunits: alpha(3), beta(3), gamma(1), delta(1), epsilon(1). F(0) has three main subunits: a(1), b(2) and c(10-14). The alpha and beta chains form an alternating ring which encloses part of the gamma chain. F(1) is attached to F(0) by a central stalk formed by the gamma and epsilon chains, while a peripheral stalk is formed by the delta and b chains.

The protein resides in the cell inner membrane. F(1)F(0) ATP synthase produces ATP from ADP in the presence of a proton or sodium gradient. F-type ATPases consist of two structural domains, F(1) containing the extramembraneous catalytic core and F(0) containing the membrane proton channel, linked together by a central stalk and a peripheral stalk. During catalysis, ATP synthesis in the catalytic domain of F(1) is coupled via a rotary mechanism of the central stalk subunits to proton translocation. Functionally, this protein is part of the stalk that links CF(0) to CF(1). It either transmits conformational changes from CF(0) to CF(1) or is implicated in proton conduction. The protein is ATP synthase subunit delta of Desulfosudis oleivorans (strain DSM 6200 / JCM 39069 / Hxd3) (Desulfococcus oleovorans).